The primary structure comprises 274 residues: MSGKKWDEEEEESSAPNSPVLAPGRRRFDDEEGNESDVLDSWDAAEDSEVEREKAKKAAEAKAKAEAEAAANKKSKAQRIAERQAERARQLAEDSDAEEETEAERRERLRREQKESDLKHAEDLFAGIGISNDRKVVSKGTIVQIDPKDPNNTIDISTLALFNPTTKTQFETLRTTLGPMIGKLSPKPHYTLFLQEFSKQLAKDLKSDEIKKIASTLTALSNEKLKEEKAAEKGGKKSKAAKTKTSLAGVGRGGAIAEAHDTYDDDAFGDDDFM.

Disordered stretches follow at residues 1-120 (MSGK…DLKH) and 227-246 (EEKA…TKTS). A compositionally biased stretch (acidic residues) spans 30 to 50 (DEEGNESDVLDSWDAAEDSEV). Positions 46-112 (EDSEVEREKA…AERRERLRRE (67 aa)) form a coiled coil. 2 stretches are compositionally biased toward basic and acidic residues: residues 51–67 (EREK…KAEA) and 79–92 (RIAE…RQLA). A compositionally biased stretch (acidic residues) spans 93 to 102 (EDSDAEEETE). A compositionally biased stretch (basic and acidic residues) spans 103 to 120 (AERRERLRREQKESDLKH).

Belongs to the eIF-3 subunit J family. In terms of assembly, component of the eukaryotic translation initiation factor 3 (eIF-3) complex.

The protein resides in the cytoplasm. Its function is as follows. Component of the eukaryotic translation initiation factor 3 (eIF-3) complex, which is involved in protein synthesis of a specialized repertoire of mRNAs and, together with other initiation factors, stimulates binding of mRNA and methionyl-tRNAi to the 40S ribosome. The eIF-3 complex specifically targets and initiates translation of a subset of mRNAs involved in cell proliferation. This chain is Eukaryotic translation initiation factor 3 subunit J (hcr-1), found in Neurospora crassa (strain ATCC 24698 / 74-OR23-1A / CBS 708.71 / DSM 1257 / FGSC 987).